The following is a 277-amino-acid chain: Large ribosomal subunit protein uL2 (277 aa).

Disordered stretches follow at residues 28 to 55 and 207 to 277; these read EPEKSLTHHKHSKQGRNNRGVVTSRHRG and KAGR…RTQG. Basic residues-rich tracts occupy residues 34–43, 209–220, and 255–265; these read THHKHSKQGR, GRTRHRGQRPHV, and LGRKTRNKKKR.

It belongs to the universal ribosomal protein uL2 family. As to quaternary structure, part of the 50S ribosomal subunit. Forms a bridge to the 30S subunit in the 70S ribosome.

In terms of biological role, one of the primary rRNA binding proteins. Required for association of the 30S and 50S subunits to form the 70S ribosome, for tRNA binding and peptide bond formation. It has been suggested to have peptidyltransferase activity; this is somewhat controversial. Makes several contacts with the 16S rRNA in the 70S ribosome. The polypeptide is Large ribosomal subunit protein uL2 (Microcystis aeruginosa (strain NIES-843 / IAM M-2473)).